Consider the following 425-residue polypeptide: Histidine--tRNA ligase (425 aa).

It belongs to the class-II aminoacyl-tRNA synthetase family. In terms of assembly, homodimer.

Its subcellular location is the cytoplasm. The enzyme catalyses tRNA(His) + L-histidine + ATP = L-histidyl-tRNA(His) + AMP + diphosphate + H(+). The polypeptide is Histidine--tRNA ligase (Aeromonas salmonicida (strain A449)).